The primary structure comprises 260 residues: uncharacterized protein (260 aa).

The PNPLA domain occupies 8–166 (LALGSGGARG…VDRIPVSVVK (159 aa)). A GXSXG motif is present at residues 39–43 (GSSMG). Catalysis depends on serine 41, which acts as the Nucleophile. The Proton acceptor role is filled by aspartate 153. The DGA/G motif lies at 153–155 (DGA).

This sequence belongs to the NTE family.

This is an uncharacterized protein from Bacillus subtilis (strain 168).